The following is a 402-amino-acid chain: Sex hormone-binding globulin (402 aa).

Positions 1–29 are cleaved as a signal peptide; it reads MESRGPLATSRLLLLLLLLLLRHTRQGWA. The O-linked (GalNAc...) threonine glycan is linked to Thr-36. 2 consecutive Laminin G-like domains span residues 45–217 and 224–390; these read VHLS…LRSC and GIFL…THSC. Cystine bridges form between Cys-193–Cys-217 and Cys-362–Cys-390. 2 N-linked (GlcNAc...) asparagine glycosylation sites follow: Asn-380 and Asn-396.

Homodimer. In terms of processing, variant Asn-356 contains one N-linked (GlcNAc...) at position 356. As to expression, isoform 1 and isoform 2 are present in liver and testis.

It localises to the secreted. In terms of biological role, functions as an androgen transport protein, but may also be involved in receptor mediated processes. Each dimer binds one molecule of steroid. Specific for 5-alpha-dihydrotestosterone, testosterone, and 17-beta-estradiol. Regulates the plasma metabolic clearance rate of steroid hormones by controlling their plasma concentration. The chain is Sex hormone-binding globulin from Homo sapiens (Human).